Consider the following 237-residue polypeptide: Methylosome subunit pICln (237 aa).

Ser-2 carries the post-translational modification N-acetylserine. Phosphoserine is present on residues Ser-102, Ser-144, Ser-193, and Ser-195. Position 223 is a phosphothreonine (Thr-223).

The protein belongs to the pICln (TC 1.A.47) family. Component of the methylosome, a 20S complex containing at least PRMT5/SKB1, WDR77/MEP50 and CLNS1A/pICln. May mediate SNRPD1 and SNRPD3 methylation. Forms a 6S pICln-Sm complex composed of CLNS1A/pICln, SNRPD1, SNRPD2, SNRPE, SNRPF and SNRPG; ring-like structure where CLNS1A/pICln mimics additional Sm proteins and which is unable to assemble into the core snRNP. Interacts with LSM10 and LSM11.

It localises to the cytoplasm. The protein localises to the cytosol. The protein resides in the nucleus. Its subcellular location is the cytoskeleton. Its function is as follows. Involved in both the assembly of spliceosomal snRNPs and the methylation of Sm proteins. Chaperone that regulates the assembly of spliceosomal U1, U2, U4 and U5 small nuclear ribonucleoproteins (snRNPs), the building blocks of the spliceosome, and thereby plays an important role in the splicing of cellular pre-mRNAs. Most spliceosomal snRNPs contain a common set of Sm proteins SNRPB, SNRPD1, SNRPD2, SNRPD3, SNRPE, SNRPF and SNRPG that assemble in a heptameric protein ring on the Sm site of the small nuclear RNA to form the core snRNP (Sm core). In the cytosol, the Sm proteins SNRPD1, SNRPD2, SNRPE, SNRPF and SNRPG are trapped in an inactive 6S pICln-Sm complex by the chaperone CLNS1A that controls the assembly of the core snRNP. Dissociation by the SMN complex of CLNS1A from the trapped Sm proteins and their transfer to an SMN-Sm complex triggers the assembly of core snRNPs and their transport to the nucleus. The chain is Methylosome subunit pICln (CLNS1A) from Pongo abelii (Sumatran orangutan).